The following is a 432-amino-acid chain: Gamma-glutamyl phosphate reductase (432 aa).

Belongs to the gamma-glutamyl phosphate reductase family.

Its subcellular location is the cytoplasm. The catalysed reaction is L-glutamate 5-semialdehyde + phosphate + NADP(+) = L-glutamyl 5-phosphate + NADPH + H(+). It participates in amino-acid biosynthesis; L-proline biosynthesis; L-glutamate 5-semialdehyde from L-glutamate: step 2/2. Functionally, catalyzes the NADPH-dependent reduction of L-glutamate 5-phosphate into L-glutamate 5-semialdehyde and phosphate. The product spontaneously undergoes cyclization to form 1-pyrroline-5-carboxylate. The sequence is that of Gamma-glutamyl phosphate reductase from Methylorubrum extorquens (strain CM4 / NCIMB 13688) (Methylobacterium extorquens).